We begin with the raw amino-acid sequence, 283 residues long: Thymidylate synthase (283 aa).

Arg22 lines the dUMP pocket. Cys160 serves as the catalytic Nucleophile. DUMP is bound by residues 180 to 183 (RSCD), Asn191, and 221 to 223 (HIY). Asp183 lines the (6R)-5,10-methylene-5,6,7,8-tetrahydrofolate pocket. Ser282 is a (6R)-5,10-methylene-5,6,7,8-tetrahydrofolate binding site.

Belongs to the thymidylate synthase family. Bacterial-type ThyA subfamily. In terms of assembly, homodimer.

It localises to the cytoplasm. The enzyme catalyses dUMP + (6R)-5,10-methylene-5,6,7,8-tetrahydrofolate = 7,8-dihydrofolate + dTMP. It functions in the pathway pyrimidine metabolism; dTTP biosynthesis. Catalyzes the reductive methylation of 2'-deoxyuridine-5'-monophosphate (dUMP) to 2'-deoxythymidine-5'-monophosphate (dTMP) while utilizing 5,10-methylenetetrahydrofolate (mTHF) as the methyl donor and reductant in the reaction, yielding dihydrofolate (DHF) as a by-product. This enzymatic reaction provides an intracellular de novo source of dTMP, an essential precursor for DNA biosynthesis. In Haemophilus influenzae (strain PittGG), this protein is Thymidylate synthase.